Consider the following 236-residue polypeptide: DNA repair protein RecO (236 aa).

This sequence belongs to the RecO family.

Its function is as follows. Involved in DNA repair and RecF pathway recombination. This is DNA repair protein RecO from Haemophilus influenzae (strain PittGG).